We begin with the raw amino-acid sequence, 151 residues long: Chaperonin GroEL (151 aa).

41–45 (DGTTT) is a binding site for ATP.

It belongs to the chaperonin (HSP60) family. In terms of assembly, forms a cylinder of 14 subunits composed of two heptameric rings stacked back-to-back. Interacts with the co-chaperonin GroES.

It localises to the cytoplasm. The catalysed reaction is ATP + H2O + a folded polypeptide = ADP + phosphate + an unfolded polypeptide.. Its function is as follows. Together with its co-chaperonin GroES, plays an essential role in assisting protein folding. The GroEL-GroES system forms a nano-cage that allows encapsulation of the non-native substrate proteins and provides a physical environment optimized to promote and accelerate protein folding. The sequence is that of Chaperonin GroEL from Mycobacterium avium.